The chain runs to 554 residues: Glutamine--tRNA ligase (554 aa).

The 'HIGH' region motif lies at 34–44 (PEPNGYLHIGH). ATP is bound by residues 35-37 (EPN) and 41-47 (HIGHAKS). Positions 67 and 212 each coordinate L-glutamine. ATP-binding positions include Thr231, 261 to 262 (RL), and 269 to 271 (MSK). Residues 268–272 (VMSKR) carry the 'KMSKS' region motif. The tract at residues 317 to 324 (TKQDNTIE) is interaction with tRNA.

This sequence belongs to the class-I aminoacyl-tRNA synthetase family. Monomer.

It localises to the cytoplasm. It catalyses the reaction tRNA(Gln) + L-glutamine + ATP = L-glutaminyl-tRNA(Gln) + AMP + diphosphate. In Escherichia coli O157:H7, this protein is Glutamine--tRNA ligase.